We begin with the raw amino-acid sequence, 328 residues long: GTP 3',8-cyclase (328 aa).

Residues 1–229 (MNTVDYLRIS…ESFVPGNGPA (229 aa)) enclose the Radical SAM core domain. GTP is bound at residue Arg8. Residues Cys15 and Cys19 each coordinate [4Fe-4S] cluster. Tyr21 contacts S-adenosyl-L-methionine. Cys22 contacts [4Fe-4S] cluster. A GTP-binding site is contributed by Arg60. Gly64 contacts S-adenosyl-L-methionine. Thr91 contributes to the GTP binding site. Ser115 is an S-adenosyl-L-methionine binding site. Lys155 is a binding site for GTP. S-adenosyl-L-methionine is bound at residue Met189. Residues Cys252 and Cys255 each contribute to the [4Fe-4S] cluster site. Residue 257 to 259 (RMR) coordinates GTP. Residue Cys269 coordinates [4Fe-4S] cluster.

The protein belongs to the radical SAM superfamily. MoaA family. As to quaternary structure, monomer and homodimer. It depends on [4Fe-4S] cluster as a cofactor.

The enzyme catalyses GTP + AH2 + S-adenosyl-L-methionine = (8S)-3',8-cyclo-7,8-dihydroguanosine 5'-triphosphate + 5'-deoxyadenosine + L-methionine + A + H(+). The protein operates within cofactor biosynthesis; molybdopterin biosynthesis. Functionally, catalyzes the cyclization of GTP to (8S)-3',8-cyclo-7,8-dihydroguanosine 5'-triphosphate. This Trichodesmium erythraeum (strain IMS101) protein is GTP 3',8-cyclase.